The chain runs to 393 residues: Nucleosome assembly protein 1-like 1 (393 aa).

Positions 1–10 (MANIDNKEQT) are enriched in basic and acidic residues. Disordered stretches follow at residues 1-36 (MANIDNKEQTELDQQDMEDVEDIEEEEAGEDANSKA) and 132-165 (ECEWKVDEEEDISGDLKDKAKLEEEKKDEEKEDP). 2 stretches are compositionally biased toward acidic residues: residues 11–30 (ELDQQDMEDVEDIEEEEAGE) and 132–144 (ECEWKVDEEEDIS). Residues 126-151 (YEPTEEECEWKVDEEEDISGDLKDKA) carry the NAP1L motif motif. The span at 145-165 (GDLKDKAKLEEEKKDEEKEDP) shows a compositional bias: basic and acidic residues. Residues 274-280 (IKKKQKH) carry the Nuclear localization signal motif. The segment covering 347–378 (AIEDDDDDYDEEGEEADDEEGEEEADEDNDPD) has biased composition (acidic residues). Residues 347 to 393 (AIEDDDDDYDEEGEEADDEEGEEEADEDNDPDYEPKKDQNPAECKQQ) are disordered. A compositionally biased stretch (basic and acidic residues) spans 379-393 (YEPKKDQNPAECKQQ).

This sequence belongs to the nucleosome assembly protein (NAP) family. Forms homomultimers. Interacts with histone B4. Interacts with the B-type cyclins ccnb1 and ccnb2. Phosphorylated by cyclin B-cdc2 kinase complexes.

The protein resides in the cytoplasm. The protein localises to the nucleus. In terms of biological role, acts as a chaperone for the linker histone to facilitate deposition of histone B4 onto linker DNA. Required for both remodeling of sperm chromatin into nucleosomes, and linker histone binding to nucleosome core dimers. Plays a role in tissue-specific gene regulation. Required for primitive hemopoiesis, acting upstream of tal1/scl. The chain is Nucleosome assembly protein 1-like 1 from Xenopus tropicalis (Western clawed frog).